A 239-amino-acid chain; its full sequence is Homeobox-leucine zipper protein HOX12 (239 aa).

The segment at 22–65 (PEAATSGGEQKKARQRRRRKVKPEAAAALAGESGGDEQAKKRRL) is disordered. The homeobox DNA-binding region spans 58 to 117 (EQAKKRRLSDEQARFLEMSFKKERKLETPRKVQLAAELGLDAKQVAVWFQNRRARHKSKL). A coiled-coil region spans residues 107-168 (QNRRARHKSK…KLAAVAAATT (62 aa)).

Belongs to the HD-ZIP homeobox family. Class I subfamily. In terms of tissue distribution, expressed in seedlings, roots, stems, leaf sheaths and panicles.

Its subcellular location is the nucleus. Probable transcription factor. This Oryza sativa subsp. indica (Rice) protein is Homeobox-leucine zipper protein HOX12 (HOX12).